Reading from the N-terminus, the 383-residue chain is Putative glutamate--cysteine ligase 2-2 (383 aa).

The protein belongs to the glutamate--cysteine ligase type 2 family. YbdK subfamily.

The enzyme catalyses L-cysteine + L-glutamate + ATP = gamma-L-glutamyl-L-cysteine + ADP + phosphate + H(+). ATP-dependent carboxylate-amine ligase which exhibits weak glutamate--cysteine ligase activity. This Legionella pneumophila (strain Paris) protein is Putative glutamate--cysteine ligase 2-2.